Reading from the N-terminus, the 754-residue chain is MTRAHTLGFPRIGAKRELKFALESYWRGETTQAELIATGKSLRERHWQAQRTAGVNLLPVGDFAWYDQVLGTSLLVDAVPARHRHGDTDLDTLFRVARGRAPTGPSAAAAEMTKWFNTNYHYLVPEFSRDQRFKLGWSQLFDEVEEAKALGLPVKAVLLGPVSYLWLGKEKESGFSRLELLDRLLIVYQEILAKLAAQGVEWVQIDEPALALDLPDEWRLAYLNAYERLSGPCKLLLTTYFGSVAHQRDIITSLKVDGLHLDLVAAPEQLETLVPHLPAQWVLSAGVINGRNVWRANLAKLAPTLKALKEKLGERLWVASSCSLLHSPVDLTLEHELDPQTRSWFAFALQKCYELGLLSDYLDGGDLDKITAYSQPLVDRESDSRVHKKAVQSRLASLTNSDFDRQSAYPVRAQAQRNDLKLPLLPTTTIGSFPQTSEIRVLRQEWRAGRIDDSAYEAGIQAQIKDAIERQEAIGLDVLVHGEAERNDMVEYFGELLDGFAITRFGWVQSYGSRCVKPPVITTDIDRPTPMTLEWTKFAQSLTDKPVKGMLTGPVTILCWSFPREDVSREQSALQIGLAIRDEVADLEAAGIKIIQIDEPAIREGLPLRKQDHQAYLDWAVRAFRLSASPVVDSTQIHTHMCYSDFNLIIEAVAALDADVITIETSRSQMQLLEAFERFNYPNEIGPGVYDIHSPNVPSQGWIEDLIRKAAKQIPADRLWVNPDCGLKTRGWEETEAALKVMVNATKALRTELA.

5-methyltetrahydropteroyltri-L-glutamate is bound by residues Arg-16–Lys-19 and Lys-114. L-homocysteine-binding positions include Ile-430 to Ser-432 and Glu-483. L-methionine contacts are provided by residues Ile-430 to Ser-432 and Glu-483. 5-methyltetrahydropteroyltri-L-glutamate-binding positions include Arg-514–Cys-515 and Trp-560. Residue Asp-598 participates in L-homocysteine binding. Residue Asp-598 coordinates L-methionine. Residue Glu-604 participates in 5-methyltetrahydropteroyltri-L-glutamate binding. Residues His-640, Cys-642, and Glu-664 each coordinate Zn(2+). His-693 serves as the catalytic Proton donor. Zn(2+) is bound at residue Cys-725.

Belongs to the vitamin-B12 independent methionine synthase family. Zn(2+) serves as cofactor.

It carries out the reaction 5-methyltetrahydropteroyltri-L-glutamate + L-homocysteine = tetrahydropteroyltri-L-glutamate + L-methionine. It participates in amino-acid biosynthesis; L-methionine biosynthesis via de novo pathway; L-methionine from L-homocysteine (MetE route): step 1/1. Functionally, catalyzes the transfer of a methyl group from 5-methyltetrahydrofolate to homocysteine resulting in methionine formation. The sequence is that of 5-methyltetrahydropteroyltriglutamate--homocysteine methyltransferase from Aeromonas salmonicida (strain A449).